The primary structure comprises 379 residues: Chaperone protein DnaJ (379 aa).

Positions 5-70 (DYYETLGCDR…QKRAAYDRFG (66 aa)) constitute a J domain. A CR-type zinc finger spans residues 134-212 (GKTAQIKIPT…CGGAGRVTRE (79 aa)). Positions 147, 150, 164, 167, 186, 189, 200, and 203 each coordinate Zn(2+). 4 CXXCXGXG motif repeats span residues 147–154 (CETCSGTG), 164–171 (CRMCGGAG), 186–193 (CPNCQGRG), and 200–207 (CSDCGGAG).

This sequence belongs to the DnaJ family. In terms of assembly, homodimer. The cofactor is Zn(2+).

It is found in the cytoplasm. Its function is as follows. Participates actively in the response to hyperosmotic and heat shock by preventing the aggregation of stress-denatured proteins and by disaggregating proteins, also in an autonomous, DnaK-independent fashion. Unfolded proteins bind initially to DnaJ; upon interaction with the DnaJ-bound protein, DnaK hydrolyzes its bound ATP, resulting in the formation of a stable complex. GrpE releases ADP from DnaK; ATP binding to DnaK triggers the release of the substrate protein, thus completing the reaction cycle. Several rounds of ATP-dependent interactions between DnaJ, DnaK and GrpE are required for fully efficient folding. Also involved, together with DnaK and GrpE, in the DNA replication of plasmids through activation of initiation proteins. In Xanthobacter autotrophicus (strain ATCC BAA-1158 / Py2), this protein is Chaperone protein DnaJ.